The sequence spans 268 residues: Bis(5'-nucleosyl)-tetraphosphatase, symmetrical (268 aa).

This sequence belongs to the Ap4A hydrolase family.

The enzyme catalyses P(1),P(4)-bis(5'-adenosyl) tetraphosphate + H2O = 2 ADP + 2 H(+). In terms of biological role, hydrolyzes diadenosine 5',5'''-P1,P4-tetraphosphate to yield ADP. The sequence is that of Bis(5'-nucleosyl)-tetraphosphatase, symmetrical from Vibrio campbellii (strain ATCC BAA-1116).